The chain runs to 763 residues: Heat shock 70 kDa protein 16 (763 aa).

Disordered regions lie at residues 509–529 (ISEE…PSSG) and 701–763 (EKTT…MELD). A Phosphoserine modification is found at serine 528. Residues 701-714 (EKTTEQESLPKDAN) are compositionally biased toward basic and acidic residues.

This sequence belongs to the heat shock protein 70 (TC 1.A.33) family. HSP110/SSE subfamily.

The chain is Heat shock 70 kDa protein 16 (HSP70-16) from Arabidopsis thaliana (Mouse-ear cress).